The following is a 356-amino-acid chain: Alanine racemase, catabolic (356 aa).

The active-site Proton acceptor; specific for D-alanine is the Lys35. Lys35 is modified (N6-(pyridoxal phosphate)lysine). Position 130 (Arg130) interacts with substrate. The Proton acceptor; specific for L-alanine role is filled by Tyr253. Met301 contacts substrate.

The protein belongs to the alanine racemase family. Requires pyridoxal 5'-phosphate as cofactor.

The enzyme catalyses L-alanine = D-alanine. Isomerizes L-alanine to D-alanine which is then oxidized to pyruvate by DadA. The protein is Alanine racemase, catabolic (dadB) of Klebsiella aerogenes (Enterobacter aerogenes).